The chain runs to 157 residues: 1,4-dihydroxy-2-naphthoyl-CoA thioesterase 2 (157 aa).

Residue E56 is part of the active site. Positions 154–156 (ISK) match the Microbody targeting signal motif.

Belongs to the 4-hydroxybenzoyl-CoA thioesterase family. DHNA-CoA hydrolase subfamily. In terms of assembly, homotetramers.

It localises to the peroxisome. It participates in cofactor biosynthesis; phylloquinone biosynthesis. It functions in the pathway quinol/quinone metabolism; 1,4-dihydroxy-2-naphthoate biosynthesis; 1,4-dihydroxy-2-naphthoate from chorismate: step 7/7. Catalyzes the hydrolysis of the thioester bond of 1,4-dihydroxy-2-naphthoyl-CoA (DHNA-CoA) in peroxisomes, a necessary step to form the naphthoquinone ring of phylloquinone (vitamin K(1)). Displayed also slight thioesterase activity towards benzoyl-CoA. Is not active on phenylacetyl-CoA, succinyl-CoA and palmitoyl-CoA thioesters. This Arabidopsis thaliana (Mouse-ear cress) protein is 1,4-dihydroxy-2-naphthoyl-CoA thioesterase 2.